The primary structure comprises 308 residues: Coenzyme PQQ synthesis protein B (308 aa).

The protein belongs to the PqqB family.

It participates in cofactor biosynthesis; pyrroloquinoline quinone biosynthesis. Its function is as follows. May be involved in the transport of PQQ or its precursor to the periplasm. The chain is Coenzyme PQQ synthesis protein B from Rhodopseudomonas palustris (strain BisB5).